The sequence spans 300 residues: Manganese-binding lipoprotein MntA (300 aa).

The first 19 residues, 1 to 19 (MKKVCFSFVIMVIALIAAG), serve as a signal peptide directing secretion. C20 is lipidated: N-palmitoyl cysteine. C20 carries the S-diacylglycerol cysteine lipid modification. Mn(2+) contacts are provided by H68, H130, E196, and D271.

This sequence belongs to the bacterial solute-binding protein 9 family.

Its subcellular location is the cell membrane. Functionally, probably part of ATP-binding cassette (ABC) transport system MntABCD involved in manganese import. Binds manganese and delivers it to the membrane permease for translocation into the cytoplasm. This is Manganese-binding lipoprotein MntA (mntA) from Halalkalibacterium halodurans (strain ATCC BAA-125 / DSM 18197 / FERM 7344 / JCM 9153 / C-125) (Bacillus halodurans).